A 256-amino-acid polypeptide reads, in one-letter code: Thioredoxin-dependent peroxide reductase, mitochondrial (256 aa).

The N-terminal 61 residues, 1 to 61 (MAAAVGRLLR…KLFSTSSSCH (61 aa)), are a transit peptide targeting the mitochondrion. The Thioredoxin domain occupies 63-221 (PAVTQHAPYF…TLRLVKAFQY (159 aa)). Residue lysine 83 is modified to N6-succinyllysine. Lysine 91 bears the N6-acetyllysine; alternate mark. Lysine 91 bears the N6-succinyllysine; alternate mark. The active-site Cysteine sulfenic acid (-SOH) intermediate is cysteine 108. Threonine 146 is modified (phosphothreonine).

This sequence belongs to the peroxiredoxin family. AhpC/Prx1 subfamily. Homodimer; disulfide-linked, upon oxidation. 6 homodimers assemble to form a ring-like dodecamer. Interacts with NEK6. Interacts with LRRK2. Interacts with MAP3K13. Interacts with RPS6KC1 (via PX domain). Phosphorylated by LRRK2; phosphorylation reduces perodixase activity. In terms of processing, the enzyme can be inactivated by further oxidation of the cysteine sulfenic acid (C(P)-SOH) to sulphinic acid (C(P)-SO2H) and sulphonic acid (C(P)-SO3H) instead of its condensation to a disulfide bond. Post-translationally, S-palmitoylated.

The protein localises to the mitochondrion. The protein resides in the cytoplasm. Its subcellular location is the early endosome. It catalyses the reaction a hydroperoxide + [thioredoxin]-dithiol = an alcohol + [thioredoxin]-disulfide + H2O. In terms of biological role, thiol-specific peroxidase that catalyzes the reduction of hydrogen peroxide and organic hydroperoxides to water and alcohols, respectively. Plays a role in cell protection against oxidative stress by detoxifying peroxides. Acts synergistically with MAP3K13 to regulate the activation of NF-kappa-B in the cytosol. Required for the maintenance of physical strength. The polypeptide is Thioredoxin-dependent peroxide reductase, mitochondrial (PRDX3) (Homo sapiens (Human)).